Reading from the N-terminus, the 318-residue chain is MAEVLVLVEHAEGALKKVSAELITAARALGEPAAVVVGVPGTAAPLVDGLKAAGAAKIYVAESDLVDKYLITPAVDVLAGLAESSAPAGVLIAATADGKEIAGRLAARIGSGLLVDVVDVREGGVGVHSIFGGAFTVEAQANGDTPVITVRAGAVEAEPAAGAGEQVSVEVPAAAENAARITAREPAVAGDRPELTEATIVVAGGRGVGSAENFSVVEALADSLGAAVGASRAAVDSGYYPGQFQVGQTGKTVSPQLYIALGISGAIQHRAGMQTSKTIVAVNKDEEAPIFEIADYGVVGDLFKVAPQLTEAIKARKG.

Position 257–285 (257–285 (LYIALGISGAIQHRAGMQTSKTIVAVNKD)) interacts with FAD.

This sequence belongs to the ETF alpha-subunit/FixB family. In terms of assembly, heterodimer of an alpha and a beta subunit. The cofactor is FAD.

Functionally, the electron transfer flavoprotein serves as a specific electron acceptor for other dehydrogenases. It transfers the electrons to the main respiratory chain via ETF-ubiquinone oxidoreductase (ETF dehydrogenase). The polypeptide is Electron transfer flavoprotein subunit alpha (etfA) (Mycobacterium tuberculosis (strain CDC 1551 / Oshkosh)).